Reading from the N-terminus, the 218-residue chain is Thyroid hormone receptor alpha (218 aa).

The region spanning proline 1–aspartate 215 is the NR LBD domain. 3,3',5-triiodo-L-thyronine-binding residues include arginine 36 and serine 85.

This sequence belongs to the nuclear hormone receptor family. NR1 subfamily.

The protein resides in the nucleus. In terms of biological role, nuclear hormone receptor that can act as a repressor or activator of transcription. High affinity receptor for thyroid hormones, including triiodothyronine and thyroxine. The chain is Thyroid hormone receptor alpha (thra) from Oncorhynchus mykiss (Rainbow trout).